The following is a 338-amino-acid chain: Heat-inducible transcription repressor HrcA (338 aa).

It belongs to the HrcA family.

In terms of biological role, negative regulator of class I heat shock genes (grpE-dnaK-dnaJ and groELS operons). Prevents heat-shock induction of these operons. The chain is Heat-inducible transcription repressor HrcA from Bacillus cereus (strain AH820).